The sequence spans 272 residues: Undecaprenyl-diphosphatase (272 aa).

8 helical membrane passes run 5–25 (YSLF…FLPV), 45–65 (AKTF…VVFW), 88–108 (HLTL…GLAF), 115–135 (LFNP…LLAA), 152–171 (TYRQ…WPGF), 189–209 (YAAS…ASGL), 221–241 (GDLP…LIAI), and 251–271 (ISFV…YWVF).

The protein belongs to the UppP family.

The protein localises to the cell inner membrane. The catalysed reaction is di-trans,octa-cis-undecaprenyl diphosphate + H2O = di-trans,octa-cis-undecaprenyl phosphate + phosphate + H(+). Functionally, catalyzes the dephosphorylation of undecaprenyl diphosphate (UPP). Confers resistance to bacitracin. The sequence is that of Undecaprenyl-diphosphatase from Yersinia enterocolitica serotype O:8 / biotype 1B (strain NCTC 13174 / 8081).